The primary structure comprises 687 residues: FAD-dependent oxidoreductase domain-containing protein 2 (687 aa).

Positions 1–22 (MSVIQLVFRLLCVLDLLLAVSA) are cleaved as a signal peptide. N-linked (GlcNAc...) asparagine glycosylation is found at asparagine 29 and asparagine 305.

The protein belongs to the FOXRED2 family. FAD serves as cofactor. In terms of processing, N-glycosylated.

It localises to the endoplasmic reticulum lumen. Probable flavoprotein which may function in endoplasmic reticulum associated degradation (ERAD). May bind non-native proteins in the endoplasmic reticulum and target them to the ubiquitination machinery for subsequent degradation. The chain is FAD-dependent oxidoreductase domain-containing protein 2 (foxred2) from Danio rerio (Zebrafish).